Here is a 692-residue protein sequence, read N- to C-terminus: Protein arginine N-methyltransferase 7 (692 aa).

SAM-dependent MTase PRMT-type domains follow at residues 14–345 (SVEW…YCVW) and 358–684 (RVRQ…IIME). Residue arginine 32 is modified to Omega-N-methylarginine. Active-site residues include glutamate 144 and glutamate 153.

This sequence belongs to the class I-like SAM-binding methyltransferase superfamily. Protein arginine N-methyltransferase family. PRMT7 subfamily. In terms of assembly, homodimer and heterodimer. Interacts with CTCFL. Interacts with PRMT5 and SNRPD3.

The protein resides in the cytoplasm. Its subcellular location is the cytosol. The protein localises to the nucleus. It catalyses the reaction L-arginyl-[protein] + S-adenosyl-L-methionine = N(omega)-methyl-L-arginyl-[protein] + S-adenosyl-L-homocysteine + H(+). Functionally, arginine methyltransferase that can both catalyze the formation of omega-N monomethylarginine (MMA) and symmetrical dimethylarginine (sDMA), with a preference for the formation of MMA. Specifically mediates the symmetrical dimethylation of arginine residues in the small nuclear ribonucleoproteins Sm D1 (SNRPD1) and Sm D3 (SNRPD3); such methylation being required for the assembly and biogenesis of snRNP core particles. Specifically mediates the symmetric dimethylation of histone H4 'Arg-3' to form H4R3me2s. Plays a role in gene imprinting by being recruited by CTCFL at the H19 imprinted control region (ICR) and methylating histone H4 to form H4R3me2s, possibly leading to recruit DNA methyltransferases at these sites. May also play a role in embryonic stem cell (ESC) pluripotency. Also able to mediate the arginine methylation of histone H2A and myelin basic protein (MBP) in vitro; the relevance of such results is however unclear in vivo. In Homo sapiens (Human), this protein is Protein arginine N-methyltransferase 7 (PRMT7).